Consider the following 489-residue polypeptide: Rhamnulokinase (489 aa).

Residue A13–R17 coordinates ATP. An intrachain disulfide couples C68 to C222. Substrate-binding positions include G83 and H236–T238. D237 (proton acceptor) is an active-site residue. T259 contributes to the ATP binding site. Position 296 (N296) interacts with substrate. Residue Q304 participates in ATP binding. C353 and C370 form a disulfide bridge. Residue G402 participates in ATP binding. C413 and C417 are disulfide-bonded.

This sequence belongs to the rhamnulokinase family. In terms of assembly, monomer. Mg(2+) is required as a cofactor.

The catalysed reaction is L-rhamnulose + ATP = L-rhamnulose 1-phosphate + ADP + H(+). It functions in the pathway carbohydrate degradation; L-rhamnose degradation; glycerone phosphate from L-rhamnose: step 2/3. In terms of biological role, involved in the catabolism of L-rhamnose (6-deoxy-L-mannose). Catalyzes the transfer of the gamma-phosphate group from ATP to the 1-hydroxyl group of L-rhamnulose to yield L-rhamnulose 1-phosphate. This Escherichia coli O157:H7 protein is Rhamnulokinase.